The sequence spans 95 residues: Aspartyl/glutamyl-tRNA(Asn/Gln) amidotransferase subunit C (95 aa).

Belongs to the GatC family. Heterotrimer of A, B and C subunits.

It catalyses the reaction L-glutamyl-tRNA(Gln) + L-glutamine + ATP + H2O = L-glutaminyl-tRNA(Gln) + L-glutamate + ADP + phosphate + H(+). It carries out the reaction L-aspartyl-tRNA(Asn) + L-glutamine + ATP + H2O = L-asparaginyl-tRNA(Asn) + L-glutamate + ADP + phosphate + 2 H(+). Its function is as follows. Allows the formation of correctly charged Asn-tRNA(Asn) or Gln-tRNA(Gln) through the transamidation of misacylated Asp-tRNA(Asn) or Glu-tRNA(Gln) in organisms which lack either or both of asparaginyl-tRNA or glutaminyl-tRNA synthetases. The reaction takes place in the presence of glutamine and ATP through an activated phospho-Asp-tRNA(Asn) or phospho-Glu-tRNA(Gln). This Pseudomonas putida (strain W619) protein is Aspartyl/glutamyl-tRNA(Asn/Gln) amidotransferase subunit C.